Here is a 227-residue protein sequence, read N- to C-terminus: Urease subunit gamma/beta (227 aa).

Positions 1 to 101 (MRLTPTERDR…LAVVADPVGG (101 aa)) are urease gamma. The urease beta stretch occupies residues 102 to 227 (GGLGDDAPGA…AACGYLGADR (126 aa)).

This sequence in the N-terminal section; belongs to the urease gamma subunit family. It in the C-terminal section; belongs to the urease beta subunit family. Heterohexamer of 3 UreC (alpha) and 3 UreAB (gamma/beta) subunits.

It is found in the cytoplasm. It carries out the reaction urea + 2 H2O + H(+) = hydrogencarbonate + 2 NH4(+). It participates in nitrogen metabolism; urea degradation; CO(2) and NH(3) from urea (urease route): step 1/1. In Streptomyces coelicolor (strain ATCC BAA-471 / A3(2) / M145), this protein is Urease subunit gamma/beta.